The chain runs to 171 residues: Co-chaperone protein HscB (171 aa).

The J domain maps to 2-74; it reads DYFTLFGLPA…LTRAEYLLSL (73 aa).

The protein belongs to the HscB family. Interacts with HscA and stimulates its ATPase activity. Interacts with IscU.

Functionally, co-chaperone involved in the maturation of iron-sulfur cluster-containing proteins. Seems to help targeting proteins to be folded toward HscA. This is Co-chaperone protein HscB from Citrobacter koseri (strain ATCC BAA-895 / CDC 4225-83 / SGSC4696).